The chain runs to 263 residues: NADH dehydrogenase [ubiquinone] iron-sulfur protein 3, mitochondrial (263 aa).

Residues 1–35 constitute a mitochondrion transit peptide; that stretch reads MVAAVARLWWRGLLGASALTRGAGRPSVLLLPVRR.

It belongs to the complex I 30 kDa subunit family. As to quaternary structure, core subunit of respiratory chain NADH dehydrogenase (Complex I) which is composed of 45 different subunits. Interacts with NDUFAF3. Interacts with RAB5IF. Found in subcomplexes containing subunits NDUFS2, MT-ND1 and NDUFA13.

Its subcellular location is the mitochondrion inner membrane. The enzyme catalyses a ubiquinone + NADH + 5 H(+)(in) = a ubiquinol + NAD(+) + 4 H(+)(out). Its function is as follows. Core subunit of the mitochondrial membrane respiratory chain NADH dehydrogenase (Complex I) which catalyzes electron transfer from NADH through the respiratory chain, using ubiquinone as an electron acceptor. Essential for the catalytic activity and assembly of complex I. This is NADH dehydrogenase [ubiquinone] iron-sulfur protein 3, mitochondrial (NDUFS3) from Pongo pygmaeus (Bornean orangutan).